A 628-amino-acid polypeptide reads, in one-letter code: MBT domain-containing protein 1 (628 aa).

Residues 1–31 form a disordered region; sequence MFDGYDSCSEDTSSSSSSEESEEEVAPLPSN. An FCS-type zinc finger spans residues 45–80; it reads PDGKSGMATCEMCGMVGVRDAFYSKTKRFCSVSCSR. Positions 54, 57, 74, and 78 each coordinate Zn(2+). Lys-115 carries the post-translational modification N6-acetyllysine. MBT repeat units lie at residues 141–245, 253–350, 351–456, and 464–560; these read FSWG…LVPP, TNWK…IGHR, FKRS…LTPP, and FKWF…LQPP. Disordered stretches follow at residues 560-590 and 606-628; these read PASQ…HKKM and NFLQ…KQEP. The span at 562–573 shows a compositional bias: low complexity; it reads SQSSRENQSASS. The segment covering 574–590 has biased composition (basic residues); the sequence is KQKKKAKSQQYKGHKKM. Over residues 609–620 the composition is skewed to polar residues; it reads QGASDQESNGSA.

Monomer. Component of the NuA4 histone acetyltransferase complex. Interacts with EPC1; interaction is direct and promotes recruitment of MBTD1 into the NuA4 histone acetyltransferase complex.

It is found in the nucleus. The protein resides in the chromosome. Functionally, chromatin reader component of the NuA4 histone acetyltransferase complex, a multiprotein complex involved in transcriptional activation of select genes principally by acetylation of nucleosomal histones H4 and H2A. The NuA4 complex plays a direct role in repair of DNA double-strand breaks (DSBs) by promoting homologous recombination (HR). MBTD1 specifically recognizes and binds monomethylated and dimethylated 'Lys-20' on histone H4 (H4K20me1 and H4K20me2, respectively). In the NuA4 complex, MBTD1 promotes recruitment of the complex to H4K20me marks by competing with TP53BP1 for binding to H4K20me. Following recruitment to H4K20me at DNA breaks, the NuA4 complex catalyzes acetylation of 'Lys-15' on histone H2A (H2AK15), blocking the ubiquitination mark required for TP53BP1 localization at DNA breaks, thereby promoting homologous recombination (HR). This Homo sapiens (Human) protein is MBT domain-containing protein 1.